A 174-amino-acid chain; its full sequence is Extracellular cysteine protease (174 aa).

Active-site residues include cysteine 24, histidine 120, and asparagine 141.

Belongs to the peptidase C47 family. In terms of processing, proteolytically cleaved.

The protein resides in the secreted. It is found in the cell wall. With respect to regulation, inhibited by heavy metal ions such as Zn(2+) or Ni(2+), iodoacetamide, N-ethylmaleimide, leupeptin, SDS and E-64. Also inhibited by chloromethylketones TPCK and TLCK and by human plasma inhibitor alpha-2-macroglobulin. Stimulated by L-cysteine. Its function is as follows. Cysteine protease able to cleave elastin, insulin, myoglobin, fibronectin, fibrinogen, HMW-kininogen, alpha-1-protease inhibitor and alpha-1-antitrypsin. Along with other extracellular proteases may contribute to the colonization and infection of human tissues. In Staphylococcus epidermidis, this protein is Extracellular cysteine protease (ecpA).